Reading from the N-terminus, the 242-residue chain is Probable transcriptional regulatory protein lp_2253 (242 aa).

A disordered region spans residues 1 to 21; sequence MSGHSKWHNIQGRKNAQDAKR.

The protein belongs to the TACO1 family.

It is found in the cytoplasm. The protein is Probable transcriptional regulatory protein lp_2253 of Lactiplantibacillus plantarum (strain ATCC BAA-793 / NCIMB 8826 / WCFS1) (Lactobacillus plantarum).